Here is a 461-residue protein sequence, read N- to C-terminus: Cysteine--tRNA ligase (461 aa).

C28 lines the Zn(2+) pocket. Positions 30-40 (ITVYDLCHIGH) match the 'HIGH' region motif. Zn(2+)-binding residues include C209, H234, and E238. The 'KMSKS' region motif lies at 266–270 (KMSKS). K269 lines the ATP pocket.

Belongs to the class-I aminoacyl-tRNA synthetase family. As to quaternary structure, monomer. Zn(2+) serves as cofactor.

It is found in the cytoplasm. The catalysed reaction is tRNA(Cys) + L-cysteine + ATP = L-cysteinyl-tRNA(Cys) + AMP + diphosphate. The polypeptide is Cysteine--tRNA ligase (Klebsiella pneumoniae (strain 342)).